Reading from the N-terminus, the 209-residue chain is Small ribosomal subunit protein uS4 (209 aa).

One can recognise an S4 RNA-binding domain in the interval 99–160 (ARLDSVAYRM…RARASLRCKA (62 aa)).

Belongs to the universal ribosomal protein uS4 family. Part of the 30S ribosomal subunit. Contacts protein S5. The interaction surface between S4 and S5 is involved in control of translational fidelity.

In terms of biological role, one of the primary rRNA binding proteins, it binds directly to 16S rRNA where it nucleates assembly of the body of the 30S subunit. Functionally, with S5 and S12 plays an important role in translational accuracy. In Dechloromonas aromatica (strain RCB), this protein is Small ribosomal subunit protein uS4.